The sequence spans 327 residues: Tetraacyldisaccharide 4'-kinase (327 aa).

52 to 59 serves as a coordination point for ATP; the sequence is TLGGAGKT.

This sequence belongs to the LpxK family.

It catalyses the reaction a lipid A disaccharide + ATP = a lipid IVA + ADP + H(+). The protein operates within glycolipid biosynthesis; lipid IV(A) biosynthesis; lipid IV(A) from (3R)-3-hydroxytetradecanoyl-[acyl-carrier-protein] and UDP-N-acetyl-alpha-D-glucosamine: step 6/6. In terms of biological role, transfers the gamma-phosphate of ATP to the 4'-position of a tetraacyldisaccharide 1-phosphate intermediate (termed DS-1-P) to form tetraacyldisaccharide 1,4'-bis-phosphate (lipid IVA). The protein is Tetraacyldisaccharide 4'-kinase of Methylorubrum extorquens (strain PA1) (Methylobacterium extorquens).